The following is a 514-amino-acid chain: MMTPLNIALIHPDLGIGGAERLVVDAAIGLQDQGHRVTIYTSHCDKNHCFEEIKRGDLKVVVVGDFLPTNILGKFFILCANLRQLALVFKLVINGSIDKHDLFIVDQLSTCVPLLHLFSASGRVLFYCHFPDQLLAQRKSLVSKLYRVPFDLLEQLTMGCSDSVVVNSYFTRSVFFDTFKILRLNPRVVYPCVAMDELPIEKIDIGFYDQIIGPNNRYYLSINRFERKKDIALALNAFKASKEGHSSDTKLIICGGYDSRVAENVEYLSELQLICEKANIAHVTIFYSEFSRTPEHYTFPTGVREKKVIFLASISSSLKELLLKKAQLLLYTPSREHFGIVPLEAMKHGTPVLAVDNGGPLETVVTLKSDNQDTATGWLRRADAGIWAEAIDEQAEYVKKNPGIFATNGPKWVKDKFSRDAMTSSFLHNIDNIFMTDRVIQPWAVMVILAASYILWRSSHVFGDACRYIYLLTGGILVLRSRYLLAIFWVLLFVMQPQLSVGVDTITATLKPKL.

Asparagine 94 is a glycosylation site (N-linked (GlcNAc...) asparagine). 2 consecutive transmembrane segments (helical) span residues 443-463 (WAVM…HVFG) and 468-490 (YIYL…IFWV).

It belongs to the glycosyltransferase group 1 family.

The protein resides in the endoplasmic reticulum membrane. It catalyses the reaction a beta-D-Man-(1-&gt;4)-beta-D-GlcNAc-(1-&gt;4)-alpha-D-GlcNAc-diphospho-di-trans,poly-cis-dolichol + GDP-alpha-D-mannose = an alpha-D-Man-(1-&gt;3)-beta-D-Man-(1-&gt;4)-beta-D-GlcNAc-(1-&gt;4)-alpha-D-GlcNAc-diphospho-di-trans,poly-cis-dolichol + GDP + H(+). The catalysed reaction is an alpha-D-Man-(1-&gt;3)-beta-D-Man-(1-&gt;4)-beta-D-GlcNAc-(1-&gt;4)-alpha-D-GlcNAc-diphospho-di-trans,poly-cis-dolichol + GDP-alpha-D-mannose = an alpha-D-Man-(1-&gt;3)-[alpha-D-Man-(1-&gt;6)]-beta-D-Man-(1-&gt;4)-beta-D-GlcNAc-(1-&gt;4)-alpha-D-GlcNAc-diphospho-di-trans,poly-cis-dolichol + GDP + H(+). It functions in the pathway protein modification; protein glycosylation. Its function is as follows. Mannosylates Man(2)GlcNAc(2)-dolichol diphosphate and Man(1)GlcNAc(2)-dolichol diphosphate to form Man(3)GlcNAc(2)-dolichol diphosphate. In Eremothecium gossypii (strain ATCC 10895 / CBS 109.51 / FGSC 9923 / NRRL Y-1056) (Yeast), this protein is Alpha-1,3/1,6-mannosyltransferase ALG2 (ALG2).